Consider the following 307-residue polypeptide: Fructokinase (307 aa).

Belongs to the carbohydrate kinase PfkB family.

It carries out the reaction D-fructose + ATP = D-fructose 6-phosphate + ADP + H(+). The chain is Fructokinase (cscK) from Escherichia coli.